A 263-amino-acid chain; its full sequence is Undecaprenyl-diphosphatase 2 (263 aa).

The next 8 membrane-spanning stretches (helical) occupy residues 17–37 (TEFLPVSSTGHMILTGHLIGF), 42–62 (AKVFEVVIQLGSILAVVVIFW), 83–103 (LHIIIGMIPAGVLGVLFHSAI), 106–126 (VLFGPGPVVISLVAGGILMIV), 142–162 (ITYKQAFTIGMFQCLALWPGF), 183–203 (AEYTFILAVPMMVAASGLDLI), 216–236 (LFATGFITAFVVAMLAIVSFL), and 242–262 (VKLTPFAYYRFILAAVFYFFI).

Belongs to the UppP family.

The protein localises to the cell membrane. It carries out the reaction di-trans,octa-cis-undecaprenyl diphosphate + H2O = di-trans,octa-cis-undecaprenyl phosphate + phosphate + H(+). Functionally, catalyzes the dephosphorylation of undecaprenyl diphosphate (UPP). Confers resistance to bacitracin. The sequence is that of Undecaprenyl-diphosphatase 2 from Bacillus anthracis.